A 190-amino-acid chain; its full sequence is Mediator of RNA polymerase II transcription subunit 28 (190 aa).

Residues 76–108 (MLIKDENQDLSIEIQRKEALLQKHYNRLEEWKA) are a coiled coil.

The protein belongs to the Mediator complex subunit 28 family. As to quaternary structure, component of the Mediator complex.

It is found in the nucleus. Component of the Mediator complex, a coactivator involved in the regulated transcription of nearly all RNA polymerase II-dependent genes. Mediator functions as a bridge to convey information from gene-specific regulatory proteins to the basal RNA polymerase II transcription machinery. Mediator is recruited to promoters by direct interactions with regulatory proteins and serves as a scaffold for the assembly of a functional preinitiation complex with RNA polymerase II and the general transcription factors. The sequence is that of Mediator of RNA polymerase II transcription subunit 28 (MED28) from Drosophila pseudoobscura pseudoobscura (Fruit fly).